We begin with the raw amino-acid sequence, 242 residues long: ATP synthase subunit a (242 aa).

6 consecutive transmembrane segments (helical) span residues 29–49 (SSIY…LAFY), 84–104 (FIPL…LGMT), 114–134 (IIVT…VGFI), 140–160 (FLTL…MIVI), 189–209 (VIAS…IPLM), and 210–230 (VILI…FTIL).

Belongs to the ATPase A chain family. F-type ATPases have 2 components, CF(1) - the catalytic core - and CF(0) - the membrane proton channel. CF(1) has five subunits: alpha(3), beta(3), gamma(1), delta(1), epsilon(1). CF(0) has three main subunits: a(1), b(2) and c(9-12). The alpha and beta chains form an alternating ring which encloses part of the gamma chain. CF(1) is attached to CF(0) by a central stalk formed by the gamma and epsilon chains, while a peripheral stalk is formed by the delta and b chains.

The protein resides in the cell inner membrane. Its function is as follows. Key component of the proton channel; it plays a direct role in the translocation of protons across the membrane. The sequence is that of ATP synthase subunit a from Rickettsia prowazekii (strain Madrid E).